Consider the following 551-residue polypeptide: PA-phosphatase related-family protein DDB_G0268928 (551 aa).

Polar residues-rich tracts occupy residues 26–47 (TESL…SGKD) and 137–152 (KYNT…SSNK). 2 disordered regions span residues 26–50 (TESL…DYSS) and 123–172 (KGED…NNNN). Low complexity predominate over residues 153 to 171 (TQTTVLNNSTTSSNNINNN). 7 helical membrane-spanning segments follow: residues 211–231 (SYSD…SIIY), 232–252 (SLLV…LVFI), 273–293 (LAVG…AVVL), 346–366 (ILQL…IYIL), 393–413 (MFIC…LIFP), 474–494 (ILPA…IATM), and 500–520 (YFVD…YGGF).

This sequence belongs to the PA-phosphatase related phosphoesterase family.

The protein localises to the membrane. This Dictyostelium discoideum (Social amoeba) protein is PA-phosphatase related-family protein DDB_G0268928.